We begin with the raw amino-acid sequence, 372 residues long: Aminodeoxyfutalosine synthase (372 aa).

Residues 53-292 (HKTYFVHSIR…VARLYLDNFP (240 aa)) enclose the Radical SAM core domain. Residues Cys69, Cys73, and Cys76 each contribute to the [4Fe-4S] cluster site.

Belongs to the radical SAM superfamily. MqnE family. [4Fe-4S] cluster serves as cofactor.

The catalysed reaction is 3-[(1-carboxyvinyl)-oxy]benzoate + S-adenosyl-L-methionine + H2O = 6-amino-6-deoxyfutalosine + hydrogencarbonate + L-methionine + H(+). Its pathway is quinol/quinone metabolism; menaquinone biosynthesis. Its function is as follows. Radical SAM enzyme that catalyzes the addition of the adenosyl radical to the double bond of 3-[(1-carboxyvinyl)oxy]benzoate, leading to aminodeoxyfutalosine (AFL), a key intermediate in the formation of menaquinone (MK, vitamin K2) from chorismate. The protein is Aminodeoxyfutalosine synthase of Thermus thermophilus (strain ATCC 27634 / DSM 579 / HB8).